A 526-amino-acid polypeptide reads, in one-letter code: GMP synthase [glutamine-hydrolyzing] (526 aa).

Residues Arg9–Leu208 enclose the Glutamine amidotransferase type-1 domain. Cys86 functions as the Nucleophile in the catalytic mechanism. Residues His182 and Glu184 contribute to the active site. The region spanning Trp209–Arg401 is the GMPS ATP-PPase domain. Ser236–Ser242 is an ATP binding site.

As to quaternary structure, homodimer.

The enzyme catalyses XMP + L-glutamine + ATP + H2O = GMP + L-glutamate + AMP + diphosphate + 2 H(+). It functions in the pathway purine metabolism; GMP biosynthesis; GMP from XMP (L-Gln route): step 1/1. Its function is as follows. Catalyzes the synthesis of GMP from XMP. The protein is GMP synthase [glutamine-hydrolyzing] of Psychromonas ingrahamii (strain DSM 17664 / CCUG 51855 / 37).